Reading from the N-terminus, the 129-residue chain is Small ribosomal subunit protein uS11 (129 aa).

This sequence belongs to the universal ribosomal protein uS11 family. In terms of assembly, part of the 30S ribosomal subunit. Interacts with proteins S7 and S18. Binds to IF-3.

Its function is as follows. Located on the platform of the 30S subunit, it bridges several disparate RNA helices of the 16S rRNA. Forms part of the Shine-Dalgarno cleft in the 70S ribosome. The sequence is that of Small ribosomal subunit protein uS11 from Anoxybacillus flavithermus (strain DSM 21510 / WK1).